An 83-amino-acid chain; its full sequence is Retinal cone rhodopsin-sensitive cGMP 3',5'-cyclic phosphodiesterase subunit gamma (83 aa).

The segment covering 1–19 (MSDNTTLAPPAASQAPATP) has biased composition (low complexity). The segment at 1 to 51 (MSDNTTLAPPAASQAPATPRKGPPKFKQRQTRQFKSKPPKKGVKGFGDDIP) is disordered. Positions 22–43 (GPPKFKQRQTRQFKSKPPKKGV) are enriched in basic residues.

Belongs to the rod/cone cGMP-PDE gamma subunit family. In terms of assembly, tetramer composed of two catalytic chains (alpha and beta), and two inhibitory chains (gamma).

The catalysed reaction is 3',5'-cyclic GMP + H2O = GMP + H(+). Participates in processes of transmission and amplification of the visual signal. cGMP-PDEs are the effector molecules in G-protein-mediated phototransduction in vertebrate rods and cones. The polypeptide is Retinal cone rhodopsin-sensitive cGMP 3',5'-cyclic phosphodiesterase subunit gamma (PDE6H) (Ictidomys tridecemlineatus (Thirteen-lined ground squirrel)).